We begin with the raw amino-acid sequence, 469 residues long: Neuraminidase (469 aa).

The Intravirion portion of the chain corresponds to 1-6; sequence MNPNQK. A helical membrane pass occupies residues 7–27; that stretch reads IITIGSICMVVGIISLILQIG. The tract at residues 11-33 is involved in apical transport and lipid raft association; the sequence is GSICMVVGIISLILQIGNIVSIW. The Virion surface portion of the chain corresponds to 28–469; the sequence is NIVSIWISHS…DAELPLNIDK (442 aa). Positions 36–90 are hypervariable stalk region; that stretch reads HSIQTGNQNHTGTCDQSIITYKNSTWVNQTYVNISNTNVVAGKDTTSVILAGNSS. N-linked (GlcNAc...) asparagine; by host glycans are attached at residues N44, N58, N63, N68, and N88. Positions 91 to 469 are head of neuraminidase; it reads LCPIRGWAIY…DAELPLNIDK (379 aa). 8 cysteine pairs are disulfide-bonded: C92-C417, C124-C129, C184-C231, C233-C238, C279-C292, C281-C290, C318-C335, and C421-C446. R118 is a substrate binding site. N-linked (GlcNAc...) asparagine; by host glycosylation occurs at N146. D151 functions as the Proton donor/acceptor in the catalytic mechanism. R152 serves as a coordination point for substrate. N235 carries an N-linked (GlcNAc...) asparagine; by host glycan. Residue 277 to 278 participates in substrate binding; the sequence is EE. R293 serves as a coordination point for substrate. Ca(2+) contacts are provided by D294, G298, and D324. N-linked (GlcNAc...) asparagine; by host glycosylation is present at N365. Residue R368 participates in substrate binding. Y402 (nucleophile) is an active-site residue.

It belongs to the glycosyl hydrolase 34 family. As to quaternary structure, homotetramer. The cofactor is Ca(2+). Post-translationally, N-glycosylated.

The protein resides in the virion membrane. It localises to the host apical cell membrane. The enzyme catalyses Hydrolysis of alpha-(2-&gt;3)-, alpha-(2-&gt;6)-, alpha-(2-&gt;8)- glycosidic linkages of terminal sialic acid residues in oligosaccharides, glycoproteins, glycolipids, colominic acid and synthetic substrates.. With respect to regulation, inhibited by the neuraminidase inhibitors zanamivir (Relenza) and oseltamivir (Tamiflu). These drugs interfere with the release of progeny virus from infected cells and are effective against all influenza strains. Resistance to neuraminidase inhibitors is quite rare. In terms of biological role, catalyzes the removal of terminal sialic acid residues from viral and cellular glycoconjugates. Cleaves off the terminal sialic acids on the glycosylated HA during virus budding to facilitate virus release. Additionally helps virus spread through the circulation by further removing sialic acids from the cell surface. These cleavages prevent self-aggregation and ensure the efficient spread of the progeny virus from cell to cell. Otherwise, infection would be limited to one round of replication. Described as a receptor-destroying enzyme because it cleaves a terminal sialic acid from the cellular receptors. May facilitate viral invasion of the upper airways by cleaving the sialic acid moieties on the mucin of the airway epithelial cells. Likely to plays a role in the budding process through its association with lipid rafts during intracellular transport. May additionally display a raft-association independent effect on budding. Plays a role in the determination of host range restriction on replication and virulence. Sialidase activity in late endosome/lysosome traffic seems to enhance virus replication. This chain is Neuraminidase, found in Influenza A virus (strain A/Fort Monmouth/1/1947 H1N1).